Consider the following 945-residue polypeptide: MSLANFFNEIAFKWQKEWENSKVYEANPETDKPKKFITVAFPYTNSPLHIGHGRTYITADIYARYLRMKGYNVLFPFAFQFTGTPILSISESVKRGDEEIISTFVNIYQIPKEEIEKFSDPTYLAEYFKNNMKNTAKKLGLGIDWRREFTTVDPIFEKFVQWQYRKLMELGYIKREDSPVAYCPRDEFPVGMHDTKGDVEPEITDLDGIYFPSGDYFFIAATPRPETIFGAVALLVNPEADYVIATDSLNRKVIISRQAYDKLKYQISFREEGEKKGKDLVGMIAKNPVTEKEIKVLPSKFVDPSIGTGVVMAVPSHEPLHYIALTELKEEFELIPVIKTDELGELPGVEAVGLAQTRNPAELKDYIDTIYRIEYHKGIMREDLVDLVPNFMKEFVKDKIAGKLVKDAREKTRELLDMLNSRITIYEISNGPVYCRCGAEIVVKVIKGQWFIDYSNPIWKTSVLKSLDKINFIPTDSKKEMEKIIFNLQPRAFTRSRGLGVRLPWDEKEIIDSLSDSTIYTAFYTIVHKLKYPISLLSDKFWDYILLDRGTADEISKELGIPKEQLEEIKSEFKYWYPVDSRHSGRDLIQNHLPYYLFHHFAIFGEKFLPRQIVTNGFIRVGGKKMSKSFGNIYPLNRAIDEYGVETVRIALTSTSSISDDIEFNSNIAKSIAEQLKKIHDLISKLLEIEGVNERRDPDVWLLSIFRRYIEDVDKAYENLDLRTVYMTVYYTIYETIKDYIELTNAKINKDIIKKVISIWLRLMAPITPHLAEELWHKMSNTFVVKEKFPSINEVEYNEKSLLKVEYLRSIIEDVNRLSSELGKEAEKVVIYVNDDNNLRELLKKAIIAIKDRKSLRDFMIENNVDDKTARRIYELANVLPSTIRDLIVTTDIDEEEVIVQNINFLMNKLDLREMIVYSSTDEKAPNILGKKDLALPYKPGIAIL.

A 'HIGH' region motif is present at residues 42–52 (PYTNSPLHIGH). The 'KMSKS' region signature appears at 625–629 (KMSKS). Lys628 is a binding site for ATP.

The protein belongs to the class-I aminoacyl-tRNA synthetase family.

The protein resides in the cytoplasm. It catalyses the reaction tRNA(Leu) + L-leucine + ATP = L-leucyl-tRNA(Leu) + AMP + diphosphate. The protein is Leucine--tRNA ligase 1 of Sulfurisphaera tokodaii (strain DSM 16993 / JCM 10545 / NBRC 100140 / 7) (Sulfolobus tokodaii).